The following is a 320-amino-acid chain: Malate dehydrogenase (320 aa).

NAD(+) is bound by residues 10 to 15 (GAGQIG) and Asp-34. The substrate site is built by Arg-83 and Arg-89. NAD(+)-binding positions include Asn-96 and 119–121 (ITN). Positions 121 and 152 each coordinate substrate. The active-site Proton acceptor is His-176.

The protein belongs to the LDH/MDH superfamily. MDH type 3 family.

The enzyme catalyses (S)-malate + NAD(+) = oxaloacetate + NADH + H(+). In terms of biological role, catalyzes the reversible oxidation of malate to oxaloacetate. In Methylobacterium radiotolerans (strain ATCC 27329 / DSM 1819 / JCM 2831 / NBRC 15690 / NCIMB 10815 / 0-1), this protein is Malate dehydrogenase.